Here is a 245-residue protein sequence, read N- to C-terminus: Carbohydrate deacetylase 1 (245 aa).

Positions 59 and 125 each coordinate Mg(2+).

It belongs to the YdjC deacetylase family. In terms of assembly, homodimer. Requires Mg(2+) as cofactor.

Probably catalyzes the deacetylation of acetylated carbohydrates an important step in the degradation of oligosaccharides. The polypeptide is Carbohydrate deacetylase 1 (Listeria innocua serovar 6a (strain ATCC BAA-680 / CLIP 11262)).